A 245-amino-acid chain; its full sequence is 5-oxoprolinase subunit A (245 aa).

Belongs to the LamB/PxpA family. Forms a complex composed of PxpA, PxpB and PxpC.

It catalyses the reaction 5-oxo-L-proline + ATP + 2 H2O = L-glutamate + ADP + phosphate + H(+). Its function is as follows. Catalyzes the cleavage of 5-oxoproline to form L-glutamate coupled to the hydrolysis of ATP to ADP and inorganic phosphate. The chain is 5-oxoprolinase subunit A from Chromobacterium violaceum (strain ATCC 12472 / DSM 30191 / JCM 1249 / CCUG 213 / NBRC 12614 / NCIMB 9131 / NCTC 9757 / MK).